An 83-amino-acid polypeptide reads, in one-letter code: Kunitz-type serine protease inhibitor textilinin-3 (83 aa).

Positions methionine 1–serine 24 are cleaved as a signal peptide. The BPTI/Kunitz inhibitor domain occupies cysteine 31–cysteine 81. 3 disulfide bridges follow: cysteine 31–cysteine 81, cysteine 40–cysteine 64, and cysteine 56–cysteine 77.

Belongs to the venom Kunitz-type family. In terms of tissue distribution, expressed by the venom gland.

The protein resides in the secreted. In terms of biological role, serine protease inhibitor. Does not inhibit plasmin, and does not reduce blood loss in the mouse tail vein blood loss model. The polypeptide is Kunitz-type serine protease inhibitor textilinin-3 (Pseudonaja textilis textilis (Eastern brown snake)).